Consider the following 293-residue polypeptide: MAEGQIIKALSGFYYVLSEGKVFQCRGRGVFRKQKVTPLVGDRVVFTATGEAEGYILEICERQNELVRPPVANVEQAILVFSAVSPDFSAKLLDRFLVLVESKNITPVIVISKIDLLDGGMKETIAQYVRDYRHIGYEVIETSTVTKEGLDELMSHLCGRVSVVAGQSGVGKSSLLNALRPDLQLKTGDISTHLGRGKHTTRHVELLAIAGGLVADTPGFSALEFDHIELDELPYYFPEFRAYGEGCKFRGCLHVAEPKCAVREAAEAGDIAPYRYDHYLSFVAEMKERKPRY.

A CP-type G domain is found at 63 to 223 (QNELVRPPVA…VADTPGFSAL (161 aa)). GTP is bound by residues 112–115 (SKID) and 166–174 (GQSGVGKSS). Zn(2+) is bound by residues C247, C252, H254, and C260.

Belongs to the TRAFAC class YlqF/YawG GTPase family. RsgA subfamily. As to quaternary structure, monomer. Associates with 30S ribosomal subunit, binds 16S rRNA. Zn(2+) serves as cofactor.

The protein localises to the cytoplasm. One of several proteins that assist in the late maturation steps of the functional core of the 30S ribosomal subunit. Helps release RbfA from mature subunits. May play a role in the assembly of ribosomal proteins into the subunit. Circularly permuted GTPase that catalyzes slow GTP hydrolysis, GTPase activity is stimulated by the 30S ribosomal subunit. This is Small ribosomal subunit biogenesis GTPase RsgA from Geobacillus thermodenitrificans (strain NG80-2).